Here is a 344-residue protein sequence, read N- to C-terminus: GDSL esterase/lipase At2g19010 (344 aa).

An N-terminal signal peptide occupies residues 1-21 (MSKACWLVAAIIFTAATVVYG). The Nucleophile role is filled by S33. An N-linked (GlcNAc...) asparagine glycan is attached at N303. Catalysis depends on residues D311 and H314.

The protein belongs to the 'GDSL' lipolytic enzyme family.

Its subcellular location is the secreted. The polypeptide is GDSL esterase/lipase At2g19010 (Arabidopsis thaliana (Mouse-ear cress)).